Consider the following 531-residue polypeptide: Cytochrome P450 monooxygenase ffsD (531 aa).

The chain crosses the membrane as a helical span at residues 40–60; sequence VGALLGISLSVVLLLWVISVV. Cys-475 is a binding site for heme.

Belongs to the cytochrome P450 family. The cofactor is heme.

It localises to the membrane. It participates in mycotoxin biosynthesis. Functionally, cytochrome P450 monooxygenase; part of the gene cluster that mediates the biosynthesis of the cytotoxic leucine-containing cytochalasans, including aspochalasin C, aspochalasin E, TMC-169, flavichalasine F, aspergillin PZ, aspochalasin M and flavichalasine G. The first step in the pathway is catalyzed by the hybrid PKS-NRPS ffsA that utilizes 8 units of malonyl-CoA to iteratively assemble the octaketide chain before addition of L-leucine by the C-terminal NRPS modules. Because ffsA lacks a designated enoylreductase (ER) domain, the required activity is provided the enoyl reductase fssC. The methyltransferase (MT) domain of ffsA catalyzes the alpha-methylation at C10 and C14 using S-adenosyl-L-methionine as the methyl-donating cosubstrate. Reduction by the hydrolyase ffsE, followed by dehydration and intra-molecular Diels-Alder cyclization by the Diels-Alderase ffsF then yield the required isoindolone-fused macrocycle. A number of oxidative steps catalyzed by the tailoring cytochrome P450 monooxygenase ffsD, the FAD-linked oxidoreductase ffsJ and the short-chain dehydrogenase/reductase ffsI, are further required to afford the final products. The polypeptide is Cytochrome P450 monooxygenase ffsD (Aspergillus flavipes).